The primary structure comprises 281 residues: Diaminopimelate epimerase (281 aa).

Asn13 and Asn66 together coordinate substrate. Cys75 (proton donor) is an active-site residue. Substrate-binding positions include 76 to 77 (GN), Asn164, Asn197, and 215 to 216 (ER). The active-site Proton acceptor is the Cys224. 225–226 (GT) is a substrate binding site.

This sequence belongs to the diaminopimelate epimerase family. As to quaternary structure, homodimer.

The protein resides in the cytoplasm. It catalyses the reaction (2S,6S)-2,6-diaminopimelate = meso-2,6-diaminopimelate. It functions in the pathway amino-acid biosynthesis; L-lysine biosynthesis via DAP pathway; DL-2,6-diaminopimelate from LL-2,6-diaminopimelate: step 1/1. Catalyzes the stereoinversion of LL-2,6-diaminopimelate (L,L-DAP) to meso-diaminopimelate (meso-DAP), a precursor of L-lysine and an essential component of the bacterial peptidoglycan. In Microcystis aeruginosa (strain NIES-843 / IAM M-2473), this protein is Diaminopimelate epimerase.